The following is a 648-amino-acid chain: PTS system N-acetylglucosamine-specific EIICBA component (648 aa).

Met1 carries the N-formylmethionine modification. Positions 1–371 (MNILGFFQRL…FNLKTPGRED (371 aa)) constitute a PTS EIIC type-1 domain. A run of 12 helical transmembrane segments spans residues 16–36 (LPIA…PDLL), 38–58 (VAFI…IFAI), 70–90 (GAAA…MVTI), 92–112 (PEIN…GAAY), 132–152 (FVPI…GYVW), 159–179 (IHAG…IFGF), 192–212 (VLNT…GTVF), 232–252 (GFFP…YFAA), 260–280 (VGGM…TEPL), 282–302 (FLFM…TGIS), 303–323 (LFVA…GAID), and 339–359 (MLLV…SLVI). A PTS EIIB type-1 domain is found at 390–472 (TQLATNYIAA…KKVVARGPVA (83 aa)). The active-site Phosphocysteine intermediate; for EIIB activity is the Cys412. The residue at position 412 (Cys412) is a Phosphocysteine; by EIIA. Positions 517-621 (DEAFASKAVG…SMISPVVCSN (105 aa)) constitute a PTS EIIA type-1 domain. Residues His554 and His569 each coordinate Zn(2+). His569 acts as the Tele-phosphohistidine intermediate; for EIIA activity in catalysis. The residue at position 569 (His569) is a Phosphohistidine; by HPr.

Zn(2+) serves as cofactor. In terms of processing, 60% of isolated protein was N-formylated.

The protein resides in the cell inner membrane. The catalysed reaction is N(pros)-phospho-L-histidyl-[protein] + N-acetyl-D-glucosamine(out) = N-acetyl-D-glucosamine 6-phosphate(in) + L-histidyl-[protein]. P-chloromercuribenzoate inhibits the accumulation of both N-acetyl-D-glucosamine and antibiotic streptozotocin (2-deoxy-2-(3-methyl-3-nitrosoureido)-D-glucopyranose). N-acetyl-D-glucosamine is a competitive inhibitor for the uptake of streptozotocin. In terms of biological role, the phosphoenolpyruvate-dependent sugar phosphotransferase system (sugar PTS), a major carbohydrate active transport system, catalyzes the phosphorylation of incoming sugar substrates concomitantly with their translocation across the cell membrane. This system is involved in N-acetylglucosamine transport. It can also transport and phosphorylate the antibiotic streptozotocin. Could play a significant role in the recycling of peptidoglycan. This Escherichia coli (strain K12) protein is PTS system N-acetylglucosamine-specific EIICBA component.